The following is a 523-amino-acid chain: Cytokinin dehydrogenase 3 (523 aa).

The N-terminal stretch at 1-31 (MASYNLRSQVRLIAITIVIIITLSTPITTNT) is a signal peptide. Residues 66–243 (TKIFPSAVLI…TRARIKLEVA (178 aa)) enclose the FAD-binding PCMH-type domain. Positions 100, 102, and 104 each coordinate FAD. Histidine 105 carries the pros-8alpha-FAD histidine modification. Positions 106 and 110 each coordinate FAD. Asparagine 153 carries N-linked (GlcNAc...) asparagine glycosylation. Residues aspartate 167, threonine 172, serine 178, isoleucine 182, and isoleucine 233 each coordinate FAD. The N-linked (GlcNAc...) asparagine glycan is linked to asparagine 408. Residues tyrosine 476, serine 511, and glutamine 514 each contribute to the FAD site.

This sequence belongs to the oxygen-dependent FAD-linked oxidoreductase family. It depends on FAD as a cofactor. In terms of tissue distribution, very weak expression in the young shoot tissues around two weeks after germination. Present in the center of the floral meristem and the boundary between long stamen primordia and gynoecial primordia.

The protein resides in the endoplasmic reticulum. The protein localises to the vacuole. It carries out the reaction N(6)-dimethylallyladenine + A + H2O = 3-methyl-2-butenal + adenine + AH2. In terms of biological role, catalyzes the oxidation of cytokinins, a family of N(6)-substituted adenine derivatives that are plant hormones, where the substituent is an isopentenyl group. Catalyzes in vitro the oxidation of various types of cytokinin nucleotides that are known as direct products of cytokinin biosynthesis. In association with CKX5 regulates the activity of the reproductive meristems, flower organ size and ovule formation. This chain is Cytokinin dehydrogenase 3 (CKX3), found in Arabidopsis thaliana (Mouse-ear cress).